The chain runs to 157 residues: Oleosin-B1 (157 aa).

The segment at 2–20 (GILRKKKHERNASFKSVLT) is polar. A hydrophobic region spans residues 21–138 (SILATQAATF…AAPAAAPAAA (118 aa)). 3 consecutive transmembrane segments (helical) span residues 22–42 (ILAT…LAGT), 45–65 (AFIA…PAGI), and 72–92 (TGLA…LWLY). 9 tandem repeats follow at residues 119 to 122 (PRAA), 123 to 126 (PAAA), 127 to 130 (PAAA), 131 to 134 (PAAA), 135 to 138 (PAAA), 139 to 142 (PAPK), 143 to 146 (PAAA), 147 to 150 (PAPK), and 151 to 154 (PAAP). The 9 X 4 AA tandem repeats of P-[AR]-[AP]-[AKP] stretch occupies residues 119-122 (PRAA). Residues 137–157 (AAPAPKPAAAPAPKPAAPPAL) are disordered. Over residues 138 to 157 (APAPKPAAAPAPKPAAPPAL) the composition is skewed to pro residues.

Belongs to the oleosin family. As to expression, the full-length protein is found in the tapetal lipid bodies of immature anthers, the proteolytically cleaved C-terminal product is found on the coats of pollen grains. Highest expression is in microspores entering and undergoing mitosis. No expression is observed in male-sterile plants, green tissues or roots.

It is found in the lipid droplet. The protein localises to the membrane. In terms of biological role, many of the major pollen coat proteins are derived from endoproteolytic cleavage of oleosin-like proteins. The chain is Oleosin-B1 (OlnB1) from Brassica napus (Rape).